The chain runs to 254 residues: 5-oxoprolinase subunit A (254 aa).

The protein belongs to the LamB/PxpA family. Forms a complex composed of PxpA, PxpB and PxpC.

It carries out the reaction 5-oxo-L-proline + ATP + 2 H2O = L-glutamate + ADP + phosphate + H(+). Functionally, catalyzes the cleavage of 5-oxoproline to form L-glutamate coupled to the hydrolysis of ATP to ADP and inorganic phosphate. In Burkholderia orbicola (strain MC0-3), this protein is 5-oxoprolinase subunit A.